The sequence spans 688 residues: Translation initiation factor IF-2 (688 aa).

A disordered region spans residues 53–101 (GAEKPSVADEFEVEEKVVRSKKNSNKNKKKGKANEDKRQDNFAGRQQTP). Residues 71–83 (RSKKNSNKNKKKG) show a composition bias toward basic residues. Residues 190-359 (ERPAVVTIMG…LLVSEVEEYK (170 aa)) form the tr-type G domain. Positions 199–206 (GHVDHGKT) are G1. 199–206 (GHVDHGKT) provides a ligand contact to GTP. The segment at 224–228 (GITQH) is G2. A G3 region spans residues 245 to 248 (DTPG). GTP is bound by residues 245–249 (DTPGH) and 299–302 (NKMD). Residues 299 to 302 (NKMD) form a G4 region. Residues 335–337 (SAI) are G5.

This sequence belongs to the TRAFAC class translation factor GTPase superfamily. Classic translation factor GTPase family. IF-2 subfamily.

It is found in the cytoplasm. One of the essential components for the initiation of protein synthesis. Protects formylmethionyl-tRNA from spontaneous hydrolysis and promotes its binding to the 30S ribosomal subunits. Also involved in the hydrolysis of GTP during the formation of the 70S ribosomal complex. In Bacillus mycoides (strain KBAB4) (Bacillus weihenstephanensis), this protein is Translation initiation factor IF-2.